The chain runs to 228 residues: Lipoprotein-releasing system ATP-binding protein LolD (228 aa).

One can recognise an ABC transporter domain in the interval 7–228; sequence LNCQNLTKDY…MQDGVLRPEM (222 aa). 43–50 is a binding site for ATP; the sequence is GSSGSGKS.

This sequence belongs to the ABC transporter superfamily. Lipoprotein translocase (TC 3.A.1.125) family. As to quaternary structure, the complex is composed of two ATP-binding proteins (LolD) and two transmembrane proteins (LolC and LolE).

The protein localises to the cell inner membrane. Its function is as follows. Part of the ABC transporter complex LolCDE involved in the translocation of mature outer membrane-directed lipoproteins, from the inner membrane to the periplasmic chaperone, LolA. Responsible for the formation of the LolA-lipoprotein complex in an ATP-dependent manner. This is Lipoprotein-releasing system ATP-binding protein LolD from Mannheimia succiniciproducens (strain KCTC 0769BP / MBEL55E).